Here is a 238-residue protein sequence, read N- to C-terminus: Polynucleotide 3'-phosphatase (238 aa).

The protein belongs to the DNA 3' phosphatase family.

The protein localises to the nucleus. It carries out the reaction a 3'end (2'-deoxyribonucleotide 3'-phosphate)-DNA + H2O = a 3'-end 2'-deoxyribonucleotide-DNA + phosphate. Functionally, dephosphorylate DNA's 3'-phosphate termini. Has a role in the repair of breaks in single-stranded DNA. The chain is Polynucleotide 3'-phosphatase (TPP1) from Saccharomyces cerevisiae (strain ATCC 204508 / S288c) (Baker's yeast).